Here is a 938-residue protein sequence, read N- to C-terminus: Protein SEY1 (938 aa).

Residues 1-159 (MTSQSHGAPP…QKSAKSTPGS (159 aa)) are disordered. Topologically, residues 1-839 (MTSQSHGAPP…KRSTIQSTTQ (839 aa)) are cytoplasmic. Over residues 33-45 (SVSSSHSSHSPVT) the composition is skewed to low complexity. A compositionally biased stretch (pro residues) spans 74 to 94 (IAAPEPIAAPEPIPAPEPIAA). A compositionally biased stretch (basic and acidic residues) spans 100-118 (LKSEHKPVEREHKPVERKP). Residues 146-158 (VPTSQKSAKSTPG) show a composition bias toward polar residues. A GB1/RHD3-type G domain is found at 192–423 (GLDYHVVAVF…DPNYVFKPVY (232 aa)). GTP is bound at residue 202–209 (GSQSTGKS). The stretch at 603 to 630 (SYDDTLAALEQELDTLRDHKSKVEIDRL) forms a coiled coil. A helical transmembrane segment spans residues 840 to 860 (IPLYMYGLLLLLGWNEIMAVL). Topologically, residues 861–863 (RSP) are lumenal. The chain crosses the membrane as a helical span at residues 864–884 (VYFMFLLVAAGAAYVIHTLHL). At 885–938 (WGPLTHMTNTMIAEATDMAKAKLKQVLNEAPTGETREREAPVGSSRDDVELKDL) the chain is on the cytoplasmic side. Residues 911–938 (LNEAPTGETREREAPVGSSRDDVELKDL) form a disordered region. The segment covering 918–938 (ETREREAPVGSSRDDVELKDL) has biased composition (basic and acidic residues).

Belongs to the TRAFAC class dynamin-like GTPase superfamily. GB1/RHD3 GTPase family. RHD3 subfamily.

The protein localises to the endoplasmic reticulum membrane. Its function is as follows. Cooperates with the reticulon proteins and tubule-shaping DP1 family proteins to generate and maintain the structure of the tubular endoplasmic reticulum network. Has GTPase activity, which is required for its function in ER organization. The polypeptide is Protein SEY1 (Yarrowia lipolytica (strain CLIB 122 / E 150) (Yeast)).